The primary structure comprises 153 residues: Glycosylation-dependent cell adhesion molecule 1 (153 aa).

A signal peptide spans 1 to 18 (MKFLCVLLLASLAATSLA). Residue Thr-34 is glycosylated (O-linked (GalNAc...) threonine; partial). Phosphoserine is present on residues Ser-47, Ser-52, Ser-56, Ser-58, and Ser-64. A glycan (O-linked (HexNAc...) serine) is linked at Ser-78. Asn-95 carries N-linked (GlcNAc...) asparagine glycosylation. The segment at 95–115 (NATLGSEETTEHTPSDASTTE) is disordered. Thr-104 carries an O-linked (GalNAc...) threonine glycan.

Belongs to the PP3/GlyCAM-1 family. In terms of tissue distribution, highly and specifically expressed in the lactating mammary gland.

The protein resides in the membrane. This Bos taurus (Bovine) protein is Glycosylation-dependent cell adhesion molecule 1 (GLYCAM1).